Reading from the N-terminus, the 359-residue chain is Serpentine receptor class epsilon-13 (359 aa).

The next 7 helical transmembrane spans lie at 33 to 53 (YLFV…YYLL), 74 to 94 (AIYL…ILLI), 111 to 131 (ISLF…AFVA), 150 to 170 (WLVG…ALDF), 180 to 200 (VTIF…NFLL), 237 to 257 (LALS…IDNL), and 266 to 286 (LNTV…PFVI).

This sequence belongs to the nematode receptor-like protein sre family.

The protein resides in the membrane. In Caenorhabditis elegans, this protein is Serpentine receptor class epsilon-13 (sre-13).